Here is a 395-residue protein sequence, read N- to C-terminus: Bifunctional fatty acid conjugase/Delta(12)-oleate desaturase (395 aa).

Transmembrane regions (helical) follow at residues F73–P93 and M97–A117. The Histidine box-1 signature appears at H118–H122. Residues W130–F150 form a helical membrane-spanning segment. The Histidine box-2 motif lies at H154–H158. 3 consecutive transmembrane segments (helical) span residues V192–S212, F236–A256, and L264–F284. The short motif at H328–H332 is the Histidine box-3 element.

The protein belongs to the fatty acid desaturase type 1 family.

Its subcellular location is the membrane. It catalyses the reaction a (9Z,12Z)-octadecadienoyl-containing glycerolipid + 2 Fe(II)-[cytochrome b5] + O2 + 2 H(+) = a (9Z,11E,13Z)-octadeca-9,11,13-trienoyl-containing glycerolipid + 2 Fe(III)-[cytochrome b5] + 2 H2O. It functions in the pathway lipid metabolism; polyunsaturated fatty acid biosynthesis. Converts a single cis double bond at position 12 of linoleate incorporated into phosphatidylcholine into conjugated 11-trans and 13-cis double bonds. Produces punicic acid (18:3(9Z,11E,13Z)) from linoleic acid and conjugated octadecatetraenoic fatty acid from gamma-linolenic acid. No activity with cis- and trans-vaccenic acid, alpha-linolenic acid or homo-gamma-linolenic acid. 16:2(9Z,12Z), 18:3(9Z,12Z,15Z) and 18:2(9Z,12Z) are substrates for the conjugase to form trans-Delta(11) and cis-Delta(13) double bonds. No activity on the cis-Delta(9) double bonds of oleic and palmitoleic acids. The chain is Bifunctional fatty acid conjugase/Delta(12)-oleate desaturase from Punica granatum (Pomegranate).